The chain runs to 779 residues: FAD-dependent monooxygenase BOA8 (779 aa).

Residues glutamate 85, arginine 128, aspartate 331, and alanine 344 each contribute to the FAD site. 7 helical membrane-spanning segments follow: residues 471-491 (AQLA…KTPE), 504-524 (VKLD…IWTI), 542-562 (AFLL…YFFF), 587-607 (ILPL…WSSI), 618-638 (NAWY…KFIV), 665-685 (ILIC…SIAF), and 742-762 (LILT…GLIV).

The protein belongs to the paxM FAD-dependent monooxygenase family. Requires FAD as cofactor.

The protein localises to the membrane. It functions in the pathway polyketide biosynthesis. In terms of biological role, FAD-dependent monooxygenase; part of the gene cluster B that mediates the biosynthesis of botcinic acid and its botcinin derivatives, acetate-derived polyketides that contribute to virulence when combined with the sesquiterpene botrydial. Botcinic acid and its derivatives have been shown to induce chlorosis and necrosis during host plant infection, but also have antifungal activities. Two polyketide synthases, BOA6 and BOA9, are involved in the biosynthesis of botcinins. BOA6 mediates the formation of the per-methylated tetraketide core by condensation of four units of malonyl-CoA with one unit of acetyl-CoA, which would be methylated in activated methylene groups to yield a bicyclic acid intermediate that could then either be converted to botrylactone derivatives or lose the starter acetate unit through a retro-Claisen type C-C bond cleavage to yield botcinin derivatives. The second polyketide synthase, BOA9, is probably required for the biosynthesis of the tetraketide side chain of botcinins. The methyltransferase (MT) domain within BOA6 is probably responsible for the incorporation of four methyl groups. The trans-enoyl reductase BOA5 might take over the enoyl reductase function of BOA6 that misses an ER domain. The monooxygenases BOA2, BOA3 and BOA4 might be involved in further hydroxylations at C4, C5 and C8, whereas BOA7, close to BOA9, could potentially be involved in the hydroxylation at C4 in the side chain of botcinins. The sequence is that of FAD-dependent monooxygenase BOA8 from Botryotinia fuckeliana (strain B05.10) (Noble rot fungus).